The primary structure comprises 302 residues: Heme A synthase (302 aa).

The Cytoplasmic segment spans residues 1–8 (MFSKKNLK). Residues 9 to 29 (WLSVLATVIMAFVQLGGALVT) form a helical membrane-spanning segment. Over 30-67 (KTGSADGCGSDWPLCHGAFLPQNLPIQTLIELSHRAVS) the chain is Extracellular. A disulfide bond links Cys-37 and Cys-44. Residue Glu-60 is part of the active site. Residue His-63 coordinates heme o. A helical membrane pass occupies residues 68–88 (GLSLIVVLWLVIVAWKHIGYI). Over 89–93 (KEVKP) the chain is Cytoplasmic. The helical transmembrane segment at 94–114 (LSCISVGFLLIQALVGAAAVM) threads the bilayer. The Extracellular portion of the chain corresponds to 115-122 (WQQNAYVL). Residues 123–143 (ALHFGISLISFSSVFVLTLII) traverse the membrane as a helical segment. His-125 contributes to the heme o binding site. At 144-161 (YEVDRKYEADELFIRKPL) the chain is on the cytoplasmic side. A helical membrane pass occupies residues 162-182 (RIYTWIMALIVYMTIYTGALV). The Extracellular portion of the chain corresponds to 183–215 (RHKEASLAYGQWPLPFNDLMPHNVQDWVNLTHR). His-214 provides a ligand contact to heme b. Residues 216-236 (GMALIAFIWILITFIHAVNNY) traverse the membrane as a helical segment. Residues 237-244 (RENRTIRY) lie on the Cytoplasmic side of the membrane. A helical transmembrane segment spans residues 245-265 (GYTAAFILVILQVTTGALSII). The Extracellular portion of the chain corresponds to 266-271 (TEVNLF). The chain crosses the membrane as a helical span at residues 272–292 (IALLHALFITLLFGLIAYFII). Position 276 (His-276) interacts with heme b. The Cytoplasmic segment spans residues 293-302 (LMLRTIRSGG).

This sequence belongs to the COX15/CtaA family. Type 1 subfamily. Interacts with CtaB. Heme b serves as cofactor.

The protein localises to the cell membrane. The catalysed reaction is Fe(II)-heme o + 2 A + H2O = Fe(II)-heme a + 2 AH2. Its pathway is porphyrin-containing compound metabolism; heme A biosynthesis; heme A from heme O: step 1/1. In terms of biological role, catalyzes the conversion of heme O to heme A by two successive hydroxylations of the methyl group at C8. The first hydroxylation forms heme I, the second hydroxylation results in an unstable dihydroxymethyl group, which spontaneously dehydrates, resulting in the formyl group of heme A. This is Heme A synthase from Staphylococcus saprophyticus subsp. saprophyticus (strain ATCC 15305 / DSM 20229 / NCIMB 8711 / NCTC 7292 / S-41).